Consider the following 211-residue polypeptide: Succinate dehydrogenase subunit 4, mitochondrial (211 aa).

The N-terminal 36 residues, 1 to 36 (MASRLLARSKALALALSRADAAAPGPAAGVQWLRTL), are a transit peptide targeting the mitochondrion. The interval 41-64 (RDPAAAASPAPAPRQPAVGSPLGL) is disordered. His166 provides a ligand contact to heme. Tyr179 lines the a ubiquinone pocket. The chain crosses the membrane as a helical span at residues 188 to 210 (WVFIYFKILLIIMAKETVVYFDL).

Component of complex II composed of eight subunits in plants: four classical SDH subunits SDH1, SDH2, SDH3 and SDH4 (a flavoprotein (FP), an iron-sulfur protein (IP), and a cytochrome b composed of a large and a small subunit.), as well as four subunits unknown in mitochondria from bacteria and heterotrophic eukaryotes. Requires heme as cofactor.

The protein localises to the mitochondrion inner membrane. It functions in the pathway carbohydrate metabolism; tricarboxylic acid cycle. Functionally, membrane-anchoring subunit of succinate dehydrogenase (SDH). The protein is Succinate dehydrogenase subunit 4, mitochondrial of Oryza sativa subsp. japonica (Rice).